Reading from the N-terminus, the 331-residue chain is HTH-type transcriptional regulator RipA (331 aa).

An HTH araC/xylS-type domain is found at 112 to 209 (RAVAQVLVSN…GATPSTFTTG (98 aa)). 2 consecutive DNA-binding regions (H-T-H motif) follow at residues 129-150 (EEFAEIQGVSARTLQRQFLKST) and 176-199 (ISVVANLVGFAATSSLTRAFRRHT).

Under iron limitation, RipA negatively controls the expression of the acn (aconitase), catA (catechol 1,2 dioxygenase), leuCD (isopropylmalate dehydratase), narKGHJI (nitrite/nitrate transporter and nitrate reductase), sdhCAB (succinate dehydrogenase), pta (phosphotransacetylase) and katA (catalase) genes. Binds to the consensus sequence in the promoter region. The chain is HTH-type transcriptional regulator RipA from Corynebacterium glutamicum (strain ATCC 13032 / DSM 20300 / JCM 1318 / BCRC 11384 / CCUG 27702 / LMG 3730 / NBRC 12168 / NCIMB 10025 / NRRL B-2784 / 534).